A 372-amino-acid chain; its full sequence is ATP phosphoribosyltransferase regulatory subunit (372 aa).

This sequence belongs to the class-II aminoacyl-tRNA synthetase family. HisZ subfamily. Heteromultimer composed of HisG and HisZ subunits.

Its subcellular location is the cytoplasm. It functions in the pathway amino-acid biosynthesis; L-histidine biosynthesis; L-histidine from 5-phospho-alpha-D-ribose 1-diphosphate: step 1/9. Its function is as follows. Required for the first step of histidine biosynthesis. May allow the feedback regulation of ATP phosphoribosyltransferase activity by histidine. The protein is ATP phosphoribosyltransferase regulatory subunit of Allorhizobium ampelinum (strain ATCC BAA-846 / DSM 112012 / S4) (Agrobacterium vitis (strain S4)).